Reading from the N-terminus, the 901-residue chain is Core protein VP3 (901 aa).

It belongs to the orbivirus VP3 family.

It is found in the virion. Its function is as follows. The VP3 protein is one of the five proteins (with VP1, VP4, VP6 and VP7) which form the inner capsid of the virus. In Bluetongue virus 1 (isolate South Africa) (BTV 1), this protein is Core protein VP3 (Segment-3).